A 222-amino-acid chain; its full sequence is MSDFNKDEYLNDLPDMDDLSGQAAPAAASADSAAAAAGATQEGAAQPAAAQSQENGDSAAADGADKAGAADGKADDTLTPLGQAKKEAAEYLEALQRERAEFINFRNRAQKEQERFRQHGIIDVLTALLPALDDIDRIREHSEMDDSFKAVANKIDKAFEKFGVEKFGEKGEDFDPTKHDAILHKPDPNAEKETVDTVVEAGYRIGDRVIRAARVVVASPQN.

Residues 1–82 (MSDFNKDEYL…KADDTLTPLG (82 aa)) are disordered. Positions 20-71 (SGQAAPAAASADSAAAAAGATQEGAAQPAAAQSQENGDSAAADGADKAGAAD) are enriched in low complexity.

This sequence belongs to the GrpE family. As to quaternary structure, homodimer.

Its subcellular location is the cytoplasm. Functionally, participates actively in the response to hyperosmotic and heat shock by preventing the aggregation of stress-denatured proteins, in association with DnaK and GrpE. It is the nucleotide exchange factor for DnaK and may function as a thermosensor. Unfolded proteins bind initially to DnaJ; upon interaction with the DnaJ-bound protein, DnaK hydrolyzes its bound ATP, resulting in the formation of a stable complex. GrpE releases ADP from DnaK; ATP binding to DnaK triggers the release of the substrate protein, thus completing the reaction cycle. Several rounds of ATP-dependent interactions between DnaJ, DnaK and GrpE are required for fully efficient folding. The polypeptide is Protein GrpE (Bifidobacterium adolescentis (strain ATCC 15703 / DSM 20083 / NCTC 11814 / E194a)).